A 37-amino-acid polypeptide reads, in one-letter code: Fructose-bisphosphate aldolase A (37 aa).

This sequence belongs to the class I fructose-bisphosphate aldolase family. In terms of assembly, tetramer.

It carries out the reaction beta-D-fructose 1,6-bisphosphate = D-glyceraldehyde 3-phosphate + dihydroxyacetone phosphate. It participates in carbohydrate degradation; glycolysis; D-glyceraldehyde 3-phosphate and glycerone phosphate from D-glucose: step 4/4. In terms of biological role, plays a key role in glycolysis and gluconeogenesis. This is Fructose-bisphosphate aldolase A from Thunnus albacares (Yellowfin tuna).